The chain runs to 270 residues: Gap junction beta-3 protein (270 aa).

The Cytoplasmic portion of the chain corresponds to 1–20; it reads MDWKKLQDLLSGVNQYSTAF. A helical transmembrane segment spans residues 21 to 40; that stretch reads GRIWLSVVFVFRVLVYVVAA. Residues 41–75 are Extracellular-facing; sequence ERVWGDEQKDFDCNTRQPGCTNVCYDNFFPISNIR. The helical transmembrane segment at 76–98 threads the bilayer; that stretch reads LWALQLIFVTCPSMLVILHVAYR. Topologically, residues 99 to 126 are cytoplasmic; the sequence is EERERKHRQKHGEHCAKLYSHPGKKHGG. Residues 127-149 traverse the membrane as a helical segment; that stretch reads LWWTYLFSLIFKLIIELVFLYVL. Topologically, residues 150-188 are extracellular; it reads HTLWHGFTMPRLVQCASVVPCPNTVDCYIARPTEKKVFT. The chain crosses the membrane as a helical span at residues 189–211; the sequence is YFMVGASAVCIILTICEICYLIF. Over 212–270 the chain is Cytoplasmic; it reads HRIMRGLSKDKSTKSISSPKSSSRASTCRCHHKLLESGDLEAVPADDKLQASAPSLTPI.

This sequence belongs to the connexin family. Beta-type (group I) subfamily. In terms of assembly, a connexon is composed of a hexamer of connexins. Interacts with CNST.

It is found in the cell membrane. The protein resides in the cell junction. Its subcellular location is the gap junction. In terms of biological role, one gap junction consists of a cluster of closely packed pairs of transmembrane channels, the connexons, through which materials of low MW diffuse from one cell to a neighboring cell. The sequence is that of Gap junction beta-3 protein (Gjb3) from Rattus norvegicus (Rat).